Consider the following 601-residue polypeptide: Trehalose synthase/amylase TreS (601 aa).

A disordered region spans residues 1 to 21; that stretch reads MNEAEHSVEHPPVQGSHVEGG. Position 98 (Asp-98) interacts with substrate. Asn-140 provides a ligand contact to Ca(2+). The substrate site is built by His-141 and Gln-206. Asp-208 provides a ligand contact to Ca(2+). Arg-236 contacts substrate. Asp-238 functions as the Nucleophile in the catalytic mechanism. Positions 242, 243, and 245 each coordinate Ca(2+). The active-site Proton donor is the Glu-280. Substrate is bound by residues His-349 and Asp-350.

The protein belongs to the glycosyl hydrolase 13 family. TreS subfamily. As to quaternary structure, homohexamer.

It carries out the reaction D-maltose = alpha,alpha-trehalose. The enzyme catalyses Endohydrolysis of (1-&gt;4)-alpha-D-glucosidic linkages in polysaccharides containing three or more (1-&gt;4)-alpha-linked D-glucose units.. The protein operates within glycan biosynthesis; glycogen biosynthesis. It participates in capsule biogenesis; capsule polysaccharide biosynthesis. Catalyzes the reversible interconversion of maltose and trehalose by transglucosylation. Also displays amylase activity, catalyzing the endohydrolysis of (1-&gt;4)-alpha-D-glucosidic linkages in glycogen and maltooligosaccharides such as maltoheptaose, to produce maltose which then can be converted to trehalose. TreS plays a key role in the utilization of trehalose for the production of glycogen and alpha-glucan via the TreS-Pep2 branch involved in the biosynthesis of maltose-1-phosphate (M1P). Might also function as a sensor and/or regulator of trehalose levels within the cell. Thus, when trehalose levels in the cell become dangerously low, TreS could expedite the conversion of glycogen to maltose via its amylase activity and then convert the maltose to trehalose; but this enzyme also could expedite or promote the conversion of trehalose to glycogen when cytoplasmic trehalose levels become too high. The sequence is that of Trehalose synthase/amylase TreS from Mycobacterium tuberculosis (strain CDC 1551 / Oshkosh).